Consider the following 54-residue polypeptide: MLLEHVTITLLNNTSFALLPEAYAPFDPLIDVLPIIPLLFLLLAFVWQASVKFR.

Positions M1 to A17 are excised as a propeptide. Residues L29–A49 traverse the membrane as a helical segment.

Belongs to the PsbK family. PSII is composed of 1 copy each of membrane proteins PsbA, PsbB, PsbC, PsbD, PsbE, PsbF, PsbH, PsbI, PsbJ, PsbK, PsbL, PsbM, PsbT, PsbY, PsbZ, Psb30/Ycf12, at least 3 peripheral proteins of the oxygen-evolving complex and a large number of cofactors. It forms dimeric complexes.

Its subcellular location is the plastid. The protein localises to the chloroplast thylakoid membrane. In terms of biological role, one of the components of the core complex of photosystem II (PSII). PSII is a light-driven water:plastoquinone oxidoreductase that uses light energy to abstract electrons from H(2)O, generating O(2) and a proton gradient subsequently used for ATP formation. It consists of a core antenna complex that captures photons, and an electron transfer chain that converts photonic excitation into a charge separation. The protein is Photosystem II reaction center protein K of Euglena mutabilis.